A 166-amino-acid chain; its full sequence is 3-hydroxyacyl-[acyl-carrier-protein] dehydratase FabZ (166 aa).

His72 is an active-site residue.

This sequence belongs to the thioester dehydratase family. FabZ subfamily.

It is found in the cytoplasm. It catalyses the reaction a (3R)-hydroxyacyl-[ACP] = a (2E)-enoyl-[ACP] + H2O. In terms of biological role, involved in unsaturated fatty acids biosynthesis. Catalyzes the dehydration of short chain beta-hydroxyacyl-ACPs and long chain saturated and unsaturated beta-hydroxyacyl-ACPs. This Synechococcus sp. (strain JA-3-3Ab) (Cyanobacteria bacterium Yellowstone A-Prime) protein is 3-hydroxyacyl-[acyl-carrier-protein] dehydratase FabZ.